The following is a 583-amino-acid chain: Malonate--CoA ligase ACSF3, mitochondrial (583 aa).

A mitochondrion-targeting transit peptide spans 1-27; that stretch reads MPPHLALPFRRLFWSLASSQLIPRRHR. Residues 202–210, aspartate 455, arginine 469, and lysine 561 each bind ATP; that span reads TSGTTGRPK.

This sequence belongs to the ATP-dependent AMP-binding enzyme family.

Its subcellular location is the mitochondrion. The catalysed reaction is tetracosanoate + ATP + CoA = tetracosanoyl-CoA + AMP + diphosphate. The enzyme catalyses malonate + ATP + CoA = malonyl-CoA + AMP + diphosphate. Its function is as follows. Catalyzes the initial reaction in intramitochondrial fatty acid synthesis, by activating malonate and methylmalonate, but not acetate, into their respective CoA thioester. May have some preference toward very-long-chain substrates. The sequence is that of Malonate--CoA ligase ACSF3, mitochondrial from Mus musculus (Mouse).